A 132-amino-acid polypeptide reads, in one-letter code: Histone H2A.1 (132 aa).

Position 2 is an N-acetylserine (Ser2). An N6-acetyllysine mark is found at Lys5 and Lys8. An N6-succinyllysine mark is found at Lys14 and Lys22. Gln106 carries the N5-methylglutamine modification. Position 120 is an N6-malonyllysine; alternate (Lys120). A Glycyl lysine isopeptide (Lys-Gly) (interchain with G-Cter in SUMO) cross-link involves residue Lys127. Ser129 bears the Phosphoserine mark. The short motif at Ser129–Gln130 is the [ST]-Q motif element.

Belongs to the histone H2A family. The nucleosome is a histone octamer containing two molecules each of H2A, H2B, H3 and H4 assembled in one H3-H4 heterotetramer and two H2A-H2B heterodimers. The octamer wraps approximately 147 bp of DNA. Phosphorylated to form H2AS128ph (gamma-H2A) in response to DNA double-strand breaks (DSBs) generated by exogenous genotoxic agents and by stalled replication forks. Phosphorylation is dependent on the DNA damage checkpoint kinases MEC1/ATR and TEL1/ATM, spreads on either side of a detected DSB site and may mark the surrounding chromatin for recruitment of proteins required for DNA damage signaling and repair. Gamma-H2A interacts with ARP4, a shared component of the NuA4 histone acetyltransferase complex and the INO80 and SWR1 chromatin remodeling complexes, and serves to recruit first NuA4, mediating histone H4 acetylation, and subsequently the INO80/SWR1 complexes, facilitating DNA resection, to DSB sites. Gamma-H2A is required for sequestering cohesin around the break site, which is important for efficient post-replicative double-strand break repair by homologous recombination, holding the damaged chromatid close to its undamaged sister template. Gamma-H2A is removed from the DNA prior to the strand invasion-primer extension step of the repair process and subsequently dephosphorylated by PPH3, a component of the histone H2A phosphatase complex (HTP-C). Dephosphorylation is necessary for efficient recovery from the DNA damage checkpoint. In terms of processing, N-acetylated by NAT4. Post-translationally, acetylated by ESA1, a component of the NuA4 histone acetyltransferase (HAT) complex, to form H2AK4ac and H2AK7ac. Glutamine methylation at Gln-106 (H2AQ105me) by NOP1 is specifically dedicated to polymerase I. It is present at 35S ribosomal DNA locus and impairs binding of the FACT complex. In terms of processing, sumoylated to from H2AK126su. May lead to transcriptional repression.

It is found in the nucleus. The protein localises to the chromosome. In terms of biological role, core component of nucleosome which plays a central role in DNA double strand break (DSB) repair. Nucleosomes wrap and compact DNA into chromatin, limiting DNA accessibility to the cellular machineries which require DNA as a template. Histones thereby play a central role in transcription regulation, DNA repair, DNA replication and chromosomal stability. DNA accessibility is regulated via a complex set of post-translational modifications of histones, also called histone code, and nucleosome remodeling. The sequence is that of Histone H2A.1 (HTA1) from Saccharomyces cerevisiae (strain ATCC 204508 / S288c) (Baker's yeast).